The primary structure comprises 276 residues: Thymidylate synthase (276 aa).

Residue R26 participates in dUMP binding. H56 is a binding site for (6R)-5,10-methylene-5,6,7,8-tetrahydrofolate. 131-132 (RR) is a binding site for dUMP. C151 (nucleophile) is an active-site residue. DUMP contacts are provided by residues 178–181 (RSAD), N189, and 219–221 (HIY). Residue D181 coordinates (6R)-5,10-methylene-5,6,7,8-tetrahydrofolate. A275 contacts (6R)-5,10-methylene-5,6,7,8-tetrahydrofolate.

Belongs to the thymidylate synthase family. Bacterial-type ThyA subfamily. In terms of assembly, homodimer.

It is found in the cytoplasm. It carries out the reaction dUMP + (6R)-5,10-methylene-5,6,7,8-tetrahydrofolate = 7,8-dihydrofolate + dTMP. The protein operates within pyrimidine metabolism; dTTP biosynthesis. Its function is as follows. Catalyzes the reductive methylation of 2'-deoxyuridine-5'-monophosphate (dUMP) to 2'-deoxythymidine-5'-monophosphate (dTMP) while utilizing 5,10-methylenetetrahydrofolate (mTHF) as the methyl donor and reductant in the reaction, yielding dihydrofolate (DHF) as a by-product. This enzymatic reaction provides an intracellular de novo source of dTMP, an essential precursor for DNA biosynthesis. In Polaromonas naphthalenivorans (strain CJ2), this protein is Thymidylate synthase.